The primary structure comprises 208 residues: Probable very-long-chain (3R)-3-hydroxyacyl-CoA dehydratase (208 aa).

Topologically, residues 1-11 (MSKILKIQYLK) are cytoplasmic. Residues 12–35 (LYNVISCFLWMSVLLRTGLIWGIT) form a helical membrane-spanning segment. The Lumenal segment spans residues 36–46 (KDTAVVFHETN). A helical transmembrane segment spans residues 47–67 (TLVRWVQTLAIAEVFHSIFGL). At 68 to 78 (VSSSPLTTIIQ) the chain is on the cytoplasmic side. The chain crosses the membrane as a helical span at residues 79–97 (VASRLYLVWGVCYPFSYVI). At 98–102 (EGSPI) the chain is on the lumenal side. Residues 103–123 (YLSMIIAWSITEIIRYAFYAF) traverse the membrane as a helical segment. Residues 124 to 134 (NLNGDIPAFLT) lie on the Cytoplasmic side of the membrane. A helical transmembrane segment spans residues 135 to 157 (WLRYNTFLILYPIGAGSEFLLVL). Catalysis depends on residues tyrosine 145 and glutamate 152. The Lumenal segment spans residues 158–171 (KSRIAAQYVWSLNK). Residues 172–192 (LLWPILMSIYPPGLYIMYTHM) form a helical membrane-spanning segment. Topologically, residues 193-208 (LAQRRKISKRAAARRT) are cytoplasmic.

The protein belongs to the very long-chain fatty acids dehydratase HACD family.

It is found in the endoplasmic reticulum membrane. The enzyme catalyses a very-long-chain (3R)-3-hydroxyacyl-CoA = a very-long-chain (2E)-enoyl-CoA + H2O. It functions in the pathway lipid metabolism; fatty acid biosynthesis. Its function is as follows. Catalyzes the third of the four reactions of the long-chain fatty acids elongation cycle. This endoplasmic reticulum-bound enzymatic process, allows the addition of two carbons to the chain of long- and very long-chain fatty acids/VLCFAs per cycle. This enzyme catalyzes the dehydration of the 3-hydroxyacyl-CoA intermediate into trans-2,3-enoyl-CoA, within each cycle of fatty acid elongation. Thereby, it participates in the production of VLCFAs of different chain lengths that are involved in multiple biological processes as precursors of membrane lipids and lipid mediators. This Schizosaccharomyces pombe (strain 972 / ATCC 24843) (Fission yeast) protein is Probable very-long-chain (3R)-3-hydroxyacyl-CoA dehydratase.